The chain runs to 360 residues: MTATLERRESISLWERFCSWITSTENRLYIGWFGVLMIPTLLTATTCYIIAFIAAPPVDIDGIREPVAGSLLYGNNIISGAVIPSSNAIGVHFYPVWEAASVDEWLYNGGPYQLIVLHFLLGVASYMGREWELSYRLGMRPWIFVAFSAPVAAASAVFLVYPIGQGSFSDGMPLGISGTFNFMLVFQAEHNILMHPFHMAGVAGVFGGSLFSAMHGSLVTSSLIRETSEVESTNYGYKFGQEEETYNIVAAHGYFGRLIFQYASFNNSRALHFFLAAWPVVRIWLTALGVTTMAFNLNGFNFNQSVVDSQGRVINTWADIINRADLGMEVMHERNAHNFPLDLAAGEVLPVAVSAPAVHA.

The next 3 membrane-spanning stretches (helical) occupy residues 29–46 (YIGW…TATT), 118–133 (HFLL…EWEL), and 142–156 (WIFV…AASA). Chlorophyll a is bound at residue histidine 118. Position 126 (tyrosine 126) interacts with pheophytin a. Residues aspartate 170 and glutamate 189 each contribute to the [CaMn4O5] cluster site. A helical transmembrane segment spans residues 197-218 (FHMAGVAGVFGGSLFSAMHGSL). Histidine 198 is a binding site for chlorophyll a. A quinone-binding positions include histidine 215 and 264–265 (SF). Residue histidine 215 coordinates Fe cation. Histidine 272 is a binding site for Fe cation. The helical transmembrane segment at 274 to 288 (FLAAWPVVRIWLTAL) threads the bilayer. [CaMn4O5] cluster contacts are provided by histidine 332, glutamate 333, aspartate 342, and alanine 344. Residues 345 to 360 (AGEVLPVAVSAPAVHA) constitute a propeptide that is removed on maturation.

The protein belongs to the reaction center PufL/M/PsbA/D family. In terms of assembly, PSII is composed of 1 copy each of membrane proteins PsbA, PsbB, PsbC, PsbD, PsbE, PsbF, PsbH, PsbI, PsbJ, PsbK, PsbL, PsbM, PsbT, PsbX, PsbY, PsbZ, Psb30/Ycf12, at least 3 peripheral proteins of the oxygen-evolving complex and a large number of cofactors. It forms dimeric complexes. Requires The D1/D2 heterodimer binds P680, chlorophylls that are the primary electron donor of PSII, and subsequent electron acceptors. It shares a non-heme iron and each subunit binds pheophytin, quinone, additional chlorophylls, carotenoids and lipids. D1 provides most of the ligands for the Mn4-Ca-O5 cluster of the oxygen-evolving complex (OEC). There is also a Cl(-1) ion associated with D1 and D2, which is required for oxygen evolution. The PSII complex binds additional chlorophylls, carotenoids and specific lipids. as cofactor. Tyr-161 forms a radical intermediate that is referred to as redox-active TyrZ, YZ or Y-Z. In terms of processing, C-terminally processed by CTPA; processing is essential to allow assembly of the oxygen-evolving complex and thus photosynthetic growth.

It is found in the plastid. The protein resides in the chloroplast thylakoid membrane. The catalysed reaction is 2 a plastoquinone + 4 hnu + 2 H2O = 2 a plastoquinol + O2. Its function is as follows. Photosystem II (PSII) is a light-driven water:plastoquinone oxidoreductase that uses light energy to abstract electrons from H(2)O, generating O(2) and a proton gradient subsequently used for ATP formation. It consists of a core antenna complex that captures photons, and an electron transfer chain that converts photonic excitation into a charge separation. The D1/D2 (PsbA/PsbD) reaction center heterodimer binds P680, the primary electron donor of PSII as well as several subsequent electron acceptors. The chain is Photosystem II protein D1 from Bumilleriopsis filiformis (Yellow-green alga).